The sequence spans 424 residues: Serine--tRNA ligase (424 aa).

Residue 230 to 232 coordinates L-serine; it reads TAE. 261 to 263 is an ATP binding site; sequence RAE. Glutamate 284 serves as a coordination point for L-serine. 348 to 351 is a binding site for ATP; the sequence is EISS. Position 384 (serine 384) interacts with L-serine.

It belongs to the class-II aminoacyl-tRNA synthetase family. Type-1 seryl-tRNA synthetase subfamily. Homodimer. The tRNA molecule binds across the dimer.

It is found in the cytoplasm. The enzyme catalyses tRNA(Ser) + L-serine + ATP = L-seryl-tRNA(Ser) + AMP + diphosphate + H(+). It carries out the reaction tRNA(Sec) + L-serine + ATP = L-seryl-tRNA(Sec) + AMP + diphosphate + H(+). The protein operates within aminoacyl-tRNA biosynthesis; selenocysteinyl-tRNA(Sec) biosynthesis; L-seryl-tRNA(Sec) from L-serine and tRNA(Sec): step 1/1. Its function is as follows. Catalyzes the attachment of serine to tRNA(Ser). Is also able to aminoacylate tRNA(Sec) with serine, to form the misacylated tRNA L-seryl-tRNA(Sec), which will be further converted into selenocysteinyl-tRNA(Sec). The polypeptide is Serine--tRNA ligase (Carboxydothermus hydrogenoformans (strain ATCC BAA-161 / DSM 6008 / Z-2901)).